Here is a 1091-residue protein sequence, read N- to C-terminus: Protein CTR9 homolog (1091 aa).

Ala-2 carries the N-acetylalanine modification. TPR repeat units lie at residues 90-127 (GAYY…DMHE), 128-161 (PSTW…APDN), 163-195 (PALL…FPGC), 197-230 (AAVR…DPDN), 232-267 (EALV…YPYC), 305-338 (SHSF…TNNN), 343-376 (VFPY…YPDN), 377-410 (CETL…DPRD), 412-443 (QAFV…MKKG), 449-482 (IEVL…GIWI), 558-591 (IDAY…DDKN), 593-625 (NALS…TDGK), 640-673 (AAMR…HNSN), 674-707 (MYAA…ASGS), 713-746 (PDVW…FFYN), and 749-782 (SQIL…TPSN). Residues 919–1091 (FQRIKEQWKS…EEEEEEEEAN (173 aa)) form a disordered region. Residues 951-965 (ERRRKKGGKRRKKDK) are compositionally biased toward basic residues. 4 stretches are compositionally biased toward acidic residues: residues 974-993 (DDEE…DEDA), 1003-1016 (MTTQ…DDDA), 1026-1035 (EDPDVDDDEV), and 1080-1091 (NMEEEEEEEEAN).

In terms of assembly, component of the nuclear PAF1 complex (PAF1C), which consists of VIP2/ELF7/PAF1, VIP3/SKI8/WDR61, VIP4/LEO1, VIP5/RTF1, VIP6/ELF8/CTR9 and CDC73. Interacts with VIP3 and VIP4. In terms of tissue distribution, expressed in roots, leaves and shoot apex.

Its subcellular location is the nucleus. Functionally, component of the PAF1 complex (PAF1C) which is involved in histone modifications such as methylation on histone H3 'Lys-4' (H3K4me3). Involved in regulation of flowering time. Required for the expression of the MADS box genes and flowering repressors FLC, AGL27/FLM and AGL31/MAF2. Required for histone H3 trimethylation on 'Lys-4' H3K4me3 at the FLC and AGL27/FLM loci. Involved in the control of seed dormancy and germination. This Arabidopsis thaliana (Mouse-ear cress) protein is Protein CTR9 homolog.